The sequence spans 867 residues: Replication origin-binding protein (867 aa).

A disordered region spans residues 1 to 39; it reads MNVATCTHQTHHAARAPGATSAPGAASGDPLGARRPIGD. Residues 15–28 show a composition bias toward low complexity; that stretch reads RAPGATSAPGAASG. One can recognise a Helicase ATP-binding domain in the interval 86 to 251; sequence ASAPTARCVT…CSLRGEKNVH (166 aa). 99–106 contacts ATP; that stretch reads APMGSGKT.

Belongs to the herpesviridae OriBP family. Homodimer. Interacts with the major DNA-binding protein ICP8. Interacts with the helicase/primase component UL8 and the polymerase accessory protein UL42.

It localises to the host nucleus. In terms of biological role, functions as a docking protein to recruit essential components of the viral replication machinery to viral DNA origins. In the presence of the major DNA-binding protein, opens dsDNA leading to a conformational change in the origin that facilitates DNA unwinding and subsequent replication. This Human herpesvirus 2 (strain HG52) (HHV-2) protein is Replication origin-binding protein.